Consider the following 369-residue polypeptide: Dual specificity protein phosphatase 1-B (369 aa).

A Rhodanese domain is found at 21-138 (RAHKCLILDC…FSSQCPEFCN (118 aa)). At T168 the chain carries Phosphothreonine; by MAPK1. The 142-residue stretch at 175 to 316 (GPVEILPFLY…LLQFESQVLA (142 aa)) folds into the Tyrosine-protein phosphatase domain. C260 acts as the Phosphocysteine intermediate in catalysis.

It belongs to the protein-tyrosine phosphatase family. Non-receptor class dual specificity subfamily. In terms of processing, phosphorylated by MAPK1/ERK2 at Thr-168 and at one or more serine residues in a progesterone-dependent manner. Phosphorylation reduces its rate of degradation but does not seem to affect phosphatase activity.

Its subcellular location is the nucleus. The enzyme catalyses O-phospho-L-seryl-[protein] + H2O = L-seryl-[protein] + phosphate. It catalyses the reaction O-phospho-L-threonyl-[protein] + H2O = L-threonyl-[protein] + phosphate. The catalysed reaction is O-phospho-L-tyrosyl-[protein] + H2O = L-tyrosyl-[protein] + phosphate. Functionally, dual specificity phosphatase that dephosphorylates MAP kinase MAPK1/ERK2 on both 'Thr-188' and 'Tyr-190', regulating its activity during the meiotic cell cycle. The sequence is that of Dual specificity protein phosphatase 1-B from Xenopus laevis (African clawed frog).